The chain runs to 92 residues: Small ribosomal subunit protein uS19c (92 aa).

It belongs to the universal ribosomal protein uS19 family.

The protein resides in the plastid. It is found in the chloroplast. Its function is as follows. Protein S19 forms a complex with S13 that binds strongly to the 16S ribosomal RNA. This is Small ribosomal subunit protein uS19c from Lobularia maritima (Sweet alyssum).